The chain runs to 343 residues: Protein RecA (343 aa).

ATP is bound at residue 65-72; sequence GPESSGKT.

It belongs to the RecA family.

It is found in the cytoplasm. Its function is as follows. Can catalyze the hydrolysis of ATP in the presence of single-stranded DNA, the ATP-dependent uptake of single-stranded DNA by duplex DNA, and the ATP-dependent hybridization of homologous single-stranded DNAs. It interacts with LexA causing its activation and leading to its autocatalytic cleavage. The polypeptide is Protein RecA (Xanthomonas campestris pv. campestris (strain 8004)).